The primary structure comprises 169 residues: Putative prolyl-tRNA synthetase associated domain-containing protein 1 (169 aa).

Belongs to the PRORSD1 family.

This Homo sapiens (Human) protein is Putative prolyl-tRNA synthetase associated domain-containing protein 1 (PRORSD1P).